We begin with the raw amino-acid sequence, 220 residues long: ATP-dependent Clp protease proteolytic subunit (220 aa).

Ser122 serves as the catalytic Nucleophile. His147 is a catalytic residue.

The protein belongs to the peptidase S14 family. As to quaternary structure, fourteen ClpP subunits assemble into 2 heptameric rings which stack back to back to give a disk-like structure with a central cavity, resembling the structure of eukaryotic proteasomes.

The protein resides in the cytoplasm. The catalysed reaction is Hydrolysis of proteins to small peptides in the presence of ATP and magnesium. alpha-casein is the usual test substrate. In the absence of ATP, only oligopeptides shorter than five residues are hydrolyzed (such as succinyl-Leu-Tyr-|-NHMec, and Leu-Tyr-Leu-|-Tyr-Trp, in which cleavage of the -Tyr-|-Leu- and -Tyr-|-Trp bonds also occurs).. Its function is as follows. Cleaves peptides in various proteins in a process that requires ATP hydrolysis. Has a chymotrypsin-like activity. Plays a major role in the degradation of misfolded proteins. The sequence is that of ATP-dependent Clp protease proteolytic subunit from Colwellia psychrerythraea (strain 34H / ATCC BAA-681) (Vibrio psychroerythus).